We begin with the raw amino-acid sequence, 267 residues long: 4-hydroxy-tetrahydrodipicolinate reductase (267 aa).

Glycine 8–methionine 13 contacts NAD(+). Arginine 35 is a binding site for NADP(+). Residues glycine 98–threonine 100 and alanine 122–phenylalanine 125 each bind NAD(+). The active-site Proton donor/acceptor is the histidine 155. Histidine 156 contacts (S)-2,3,4,5-tetrahydrodipicolinate. The Proton donor role is filled by lysine 159. Residue glycine 165–threonine 166 participates in (S)-2,3,4,5-tetrahydrodipicolinate binding.

It belongs to the DapB family.

The protein resides in the cytoplasm. The catalysed reaction is (S)-2,3,4,5-tetrahydrodipicolinate + NAD(+) + H2O = (2S,4S)-4-hydroxy-2,3,4,5-tetrahydrodipicolinate + NADH + H(+). The enzyme catalyses (S)-2,3,4,5-tetrahydrodipicolinate + NADP(+) + H2O = (2S,4S)-4-hydroxy-2,3,4,5-tetrahydrodipicolinate + NADPH + H(+). It functions in the pathway amino-acid biosynthesis; L-lysine biosynthesis via DAP pathway; (S)-tetrahydrodipicolinate from L-aspartate: step 4/4. Catalyzes the conversion of 4-hydroxy-tetrahydrodipicolinate (HTPA) to tetrahydrodipicolinate. The polypeptide is 4-hydroxy-tetrahydrodipicolinate reductase (Azotobacter vinelandii (strain DJ / ATCC BAA-1303)).